Reading from the N-terminus, the 1227-residue chain is MVLAAAMSQDADPSGPEQPDRVACSVPGARASPAPSGPRGMQQPPPPPQPPPPPQAGLPQIIQNAAKLLDKNPFSVSNPNPLLPSPASLQLAQLQAQLTLHRLKLAQTAVTNNTAAATVLNQVLSKVAMSQPLFNQLRHPSVITGPHGHAGVPQHAAAIPSTRFPSNAIAFSPPSQTRGPGPSMNLPNQPPSAMVMHPFTGVMPQTPGQPAVILGIGKTGPAPATAGFYEYGKASSGQTYGPETDGQPGFLPSSASTSGSVTYEGHYSHTGQDGQAAFSKDFYGPNSQGSHVASGFPAEQAGGLKSEVGPLLQGTNSQWESPHGFSGQSKPDLTAGPMWPPPHNQPYELYDPEEPTSDRTPPSFGGRLNNSKQGFIGAGRRAKEDQALLSVRPLQAHELNDFHGVAPLHLPHICSICDKKVFDLKDWELHVKGKLHAQKCLVFSENAGIRCILGSAEGTLCASPNSTAVYNPAGNEDYASNLGTSYVPIPARSFTQSSPTFPLASVGTTFAQRKGAGRVVHICNLPEGSCTENDVINLGLPFGKVTNYILMKSTNQAFLEMAYTEAAQAMVQYYQEKSAVINGEKLLIRMSKRYKELQLKKPGKAVAAIIQDIHSQRERDMFREADRYGPERPRSRSPVSRSLSPRSHTPSFTSCSSSHSPPGPSRADWGNGRDSWEHSPYARREEERDPAPWRDNGDDKRDRMDPWAHDRKHHPRQLDKAELDERPEGGRPHREKYPRSGSPNLPHSVSSYKSREDGYYRKEPKAKSDKYLKQQQDAPGRSRRKDEARLRESRHPHPDDSGKEDGLGPKVTRAPEGAKAKQNEKNKTKRTDRDQEGADDRKENTMAENEAGKEEQEGMEESPQSVGRQEKEAEFSDPENTRTKKEQDWESESEAEGESWYPTNMEELVTVDEVGEEEDFIVEPDIPELEEIVPIDQKDKICPETCLCVTTTLDLDLAQDFPKEGVKAVGNGAAEISLKSPRELPSASTSCPSDMDVEMPGLNLDAERKPAESETGLSLEDSDCYEKEAKGVESSDVHPAPTVQQMSSPKPAEERARQPSPFVDDCKTRGTPEDGACEGSPLEEKASPPIETDLQNQACQEVLTPENSRYVEMKSLEVRSPEYTEVELKQPLSLPSWEPEDVFSELSIPLGVEFVVPRTGFYCKLCGLFYTSEETAKMSHCRSAVHYRNLQKYLSQLAEEGLKETEGADSPRPEDSGIVPRFERKKL.

2 disordered regions span residues 1–58 and 289–374; these read MVLA…QAGL and GSHV…SKQG. The segment covering 27-42 has biased composition (low complexity); the sequence is PGARASPAPSGPRGMQ. A compositionally biased stretch (pro residues) spans 43–56; the sequence is QPPPPPQPPPPPQA. Polar residues predominate over residues 313-331; sequence QGTNSQWESPHGFSGQSKP. A U1-type zinc finger spans residues 409 to 443; that stretch reads HLPHICSICDKKVFDLKDWELHVKGKLHAQKCLVF. At Ser498 the chain carries Phosphoserine. In terms of domain architecture, RRM spans 518 to 593; sequence RVVHICNLPE…EKLLIRMSKR (76 aa). The segment covering 624 to 634 has biased composition (basic and acidic residues); that stretch reads EADRYGPERPR. Disordered regions lie at residues 624 to 906 and 977 to 1089; these read EADR…TNME and SLKS…ASPP. The RS stretch occupies residues 628–655; it reads YGPERPRSRSPVSRSLSPRSHTPSFTSC. A phosphoserine mark is found at Ser635, Ser637, Ser640, Ser642, Ser660, and Ser679. The segment covering 636-660 has biased composition (low complexity); that stretch reads RSPVSRSLSPRSHTPSFTSCSSSHS. Basic and acidic residues-rich tracts occupy residues 674-709 and 716-738; these read DSWE…PWAH and RQLD…EKYP. Polar residues predominate over residues 741–752; the sequence is GSPNLPHSVSSY. Phosphoserine is present on Ser742. Composition is skewed to basic and acidic residues over residues 753–772, 784–807, and 816–856; these read KSRE…DKYL, RKDE…EDGL, and EGAK…KEEQ. Residue Ser801 is modified to Phosphoserine. 7 positions are modified to phosphoserine: Ser865, Ser876, Ser891, Ser893, Ser977, Ser980, and Ser1013. The span at 868–888 shows a compositional bias: basic and acidic residues; the sequence is RQEKEAEFSDPENTRTKKEQD. The span at 1024–1036 shows a compositional bias: basic and acidic residues; sequence CYEKEAKGVESSD. Ser1048, Ser1060, Ser1080, Ser1115, and Ser1120 each carry phosphoserine. A Matrin-type zinc finger spans residues 1161 to 1192; that stretch reads FYCKLCGLFYTSEETAKMSHCRSAVHYRNLQK. A compositionally biased stretch (basic and acidic residues) spans 1201-1215; it reads GLKETEGADSPRPED. The disordered stretch occupies residues 1201–1227; that stretch reads GLKETEGADSPRPEDSGIVPRFERKKL. The residue at position 1210 (Ser1210) is a Phosphoserine.

In terms of assembly, associates with components of the U1 and U2 U1 small nuclear ribonucleoprotein complexes. In terms of processing, phosphorylation regulates the subcellular localization. Phosphorylation of Ser-635 and Ser-637 in the RS (arginine/serine-rich) region promotes nuclear localization of the protein. In contrast, phosphorylation of the C-terminal disordered region promotes localization to cytoplasmic ribonucleoprotein granules. As to expression, mainly expressed in the heart. Also expressed in skeletal muscle tissues, ovary, small intestine and colon.

It localises to the nucleus. It is found in the cytoplasm. The protein localises to the cytoplasmic ribonucleoprotein granule. In terms of biological role, RNA-binding protein that acts as a regulator of mRNA splicing of a subset of genes encoding key structural proteins involved in cardiac development, such as TTN (Titin), CACNA1C, CAMK2D or PDLIM5/ENH. Acts as a repressor of mRNA splicing: specifically binds the 5'UCUU-3' motif that is predominantly found within intronic sequences of pre-mRNAs, leading to the exclusion of specific exons in target transcripts. RBM20-mediated exon skipping is hormone-dependent and is essential for TTN isoform transition in both cardiac and skeletal muscles. RBM20-mediated exon skipping of TTN provides substrates for the formation of circular RNA (circRNAs) from the TTN transcripts. Together with RBM24, promotes the expression of short isoforms of PDLIM5/ENH in cardiomyocytes. This is RNA-binding protein 20 from Homo sapiens (Human).